Reading from the N-terminus, the 391-residue chain is Phosphoglycerate kinase (391 aa).

Substrate contacts are provided by residues 21-23, Arg-36, 59-62, Arg-113, and Arg-146; these read DLN and HLGR. ATP is bound by residues Lys-197, Glu-319, and 345-348; that span reads GGDT.

It belongs to the phosphoglycerate kinase family. Monomer.

The protein localises to the cytoplasm. It catalyses the reaction (2R)-3-phosphoglycerate + ATP = (2R)-3-phospho-glyceroyl phosphate + ADP. The protein operates within carbohydrate degradation; glycolysis; pyruvate from D-glyceraldehyde 3-phosphate: step 2/5. The sequence is that of Phosphoglycerate kinase from Shewanella sp. (strain W3-18-1).